Here is a 206-residue protein sequence, read N- to C-terminus: Max dimerization protein 3 (206 aa).

Residues 8-25 (IQVLLQAAEFLERREREA) form an interaction with SIN3A and SIN3B region. 2 disordered regions span residues 29-66 (YASL…NELE) and 122-171 (KLRS…QEDL). The 53-residue stretch at 57 to 109 (SGRSVHNELEKRRRAQLKRCLEQLRQQMPLGVDCTRYTTLSLLRRARVHIQKL) folds into the bHLH domain. The segment covering 126 to 138 (KQQSLQQQLEQLQ) has biased composition (low complexity). Positions 143–153 (ARERERLRADS) are enriched in basic and acidic residues.

As to quaternary structure, efficient DNA binding requires dimerization with another bHLH protein. Binds DNA as a heterodimer with MAX. Interacts with SIN3A AND SIN3B. Interacts with RNF17. In terms of tissue distribution, expressed only in the proliferating areas of the testis and thymus.

It localises to the nucleus. Transcriptional repressor. Binds with MAX to form a sequence-specific DNA-binding protein complex which recognizes the core sequence 5'-CAC[GA]TG-3'. Antagonizes MYC transcriptional activity by competing for MAX and suppresses MYC dependent cell transformation. The protein is Max dimerization protein 3 (Mxd3) of Mus musculus (Mouse).